The following is a 348-amino-acid chain: Ileal sodium/bile acid cotransporter (348 aa).

Residues 1–28 lie on the Extracellular side of the membrane; that stretch reads MNDPNSCVDNATVCSGASCVVPESNFNN. Asn10 is a glycosylation site (N-linked (GlcNAc...) asparagine). The helical transmembrane segment at 29–49 threads the bilayer; the sequence is ILSVVLSTVLTILLALVMFSM. The Cytoplasmic portion of the chain corresponds to 50-82; it reads GCNVEIKKFLGHIKRPWGICVGFLCQFGIMPLT. Residues 83 to 103 form a helical membrane-spanning segment; it reads GFILSVAFDILPLQAVVVLII. Over 104–126 the chain is Extracellular; it reads GCCPGGTASNILAYWVDGDMDLS. Residues 127 to 147 form a helical membrane-spanning segment; it reads VSMTTCSTLLALGMMPLCLLI. At 148 to 157 the chain is on the cytoplasmic side; the sequence is YTKMWVDSGS. A helical membrane pass occupies residues 158–178; it reads IVIPYDNIGTSLVSLVVPVSI. At 179–195 the chain is on the extracellular side; it reads GMFVNHKWPQKAKIILK. Residues 196-216 form a helical membrane-spanning segment; that stretch reads IGSIAGAILIVLIAVVGGILY. Residues 217–224 are Cytoplasmic-facing; that stretch reads QSAWIIAP. A helical membrane pass occupies residues 225–245; the sequence is KLWIIGTIFPVAGYSLGFLLA. At 246–284 the chain is on the extracellular side; the sequence is RIAGLPWYRCRTVAFETGMQNTQLCSTIVQLSFTPEELN. The chain crosses the membrane as a helical span at residues 285–305; the sequence is VVFTFPLIYSIFQLAFAAIFL. At 306 to 348 the chain is on the cytoplasmic side; the sequence is GFYVAYKKCHGKNKAEIPESKENGTEPESSFYKANGGFQPDEK. Residues 320–329 show a composition bias toward basic and acidic residues; sequence AEIPESKENG. A disordered region spans residues 320–348; sequence AEIPESKENGTEPESSFYKANGGFQPDEK. Ser335 is modified (phosphoserine).

This sequence belongs to the bile acid:sodium symporter (BASS) (TC 2.A.28) family. In terms of assembly, monomer and homodimer. In terms of tissue distribution, mainly expressed in ileum and kidney, lower expression in cecum.

It localises to the membrane. It catalyses the reaction taurocholate(out) + 2 Na(+)(out) = taurocholate(in) + 2 Na(+)(in). The enzyme catalyses cholate(out) + 2 Na(+)(out) = cholate(in) + 2 Na(+)(in). It carries out the reaction taurochenodeoxycholate(out) + 2 Na(+)(out) = taurochenodeoxycholate(in) + 2 Na(+)(in). The catalysed reaction is tauroursodeoxycholate(out) + 2 Na(+)(out) = tauroursodeoxycholate(in) + 2 Na(+)(in). It catalyses the reaction glycocholate(out) + 2 Na(+)(out) = glycocholate(in) + 2 Na(+)(in). The enzyme catalyses tauronorcholate(out) + 2 Na(+)(out) = tauronorcholate(in) + 2 Na(+)(in). It carries out the reaction tauroallocholate(out) + 2 Na(+)(out) = tauroallocholate(in) + 2 Na(+)(in). The catalysed reaction is taurodeoxycholate(out) + 2 Na(+)(out) = taurodeoxycholate(in) + 2 Na(+)(in). It catalyses the reaction tauro-beta-muricholate(out) + 2 Na(+)(out) = tauro-beta-muricholate(in) + 2 Na(+)(in). Its function is as follows. Plays a critical role in the sodium-dependent reabsorption of bile acids from the lumen of the small intestine. Transports various bile acids, unconjugated or conjugated, such as cholate and taurocholate. Also responsible for bile acid transport in the renal proximal tubules, a salvage mechanism that helps conserve bile acids. Works collaboratively with the Na(+)-taurocholate cotransporting polypeptide (NTCP), the organic solute transporter (OST), and the bile salt export pump (BSEP), to ensure efficacious biological recycling of bile acids during enterohepatic circulation. In Homo sapiens (Human), this protein is Ileal sodium/bile acid cotransporter (SLC10A2).